The following is a 486-amino-acid chain: MKKLLHLFFPLSLRVRFLLATAAVVLVLSLAYGMVALIGYSVSFDKTTFRLLRGESNLFYTLAKWENNKLHVELPENIDKQSPTMTLIYDENGQLLWAQRDVPWLMKMIQPDWLKSNGFHEIEADVNDTSLLLSGDHSIQQQLQEVREDDDDAEMTHSVAVNVYPATSRMPKLTIVVVDTIPVELKSSYMVWSWFIYVLSANLLLVIPLLWVAAWWSLRPIEALAKEVRELEEHNRELLNPATTRELTSLVRNLNRLLKSERERYDKYRTTLTDLTHSLKTPLAVLQSTLRSLRSEKMSVSDAEPVMLEQISRISQQIGYYLHRASMHGGTLLSRELHPVAPLLDNLTSALNKVYQRKGVNISLDISPEISFVGEQNDFVEVMGNVLDNACKYCLEFVEISARQTDEHLYIVVEDDGPGIPLSKREVIFDRGQRVDTLRPGQGVGLAVAREITKQYEGKIVAGESMLGGARMEVIFGRQHSTPKDE.

At 1-16 the chain is on the cytoplasmic side; it reads MKKLLHLFFPLSLRVR. Residues 17–37 form a helical membrane-spanning segment; sequence FLLATAAVVLVLSLAYGMVAL. At 38–194 the chain is on the periplasmic side; that stretch reads IGYSVSFDKT…LKSSYMVWSW (157 aa). 2 residues coordinate a divalent metal cation: Asp-151 and Asp-152. A helical membrane pass occupies residues 195–215; that stretch reads FIYVLSANLLLVIPLLWVAAW. An HAMP domain is found at 215 to 266; the sequence is WWSLRPIEALAKEVRELEEHNRELLNPATTRELTSLVRNLNRLLKSERERYD. The Cytoplasmic segment spans residues 216–486; that stretch reads WSLRPIEALA…GRQHSTPKDE (271 aa). The 207-residue stretch at 274–480 folds into the Histidine kinase domain; sequence DLTHSLKTPL…RMEVIFGRQH (207 aa). At His-277 the chain carries Phosphohistidine; by autocatalysis. Asn-385 is a Mg(2+) binding site. ATP-binding positions include 385 to 393, 415 to 420, and 434 to 446; these read NVLDNACKY, DDGPGI, and RVDTLRPGQGVGL. Mg(2+) is bound at residue Gln-442.

In terms of assembly, homodimer.

It localises to the cell inner membrane. The catalysed reaction is ATP + protein L-histidine = ADP + protein N-phospho-L-histidine.. In terms of biological role, member of the two-component regulatory system PhoP/PhoQ involved in virulence, adaptation to low Mg(2+) environments and the control of acid resistance genes. In low periplasmic Mg(2+), PhoQ functions as a membrane-associated protein kinase that undergoes autophosphorylation and subsequently transfers the phosphate to PhoP, resulting in the expression of PhoP-activated genes (PAG) and repression of PhoP-repressed genes (PRG). In high periplasmic Mg(2+), acts as a protein phosphatase that dephosphorylates phospho-PhoP, which results in the repression of PG and may lead to expression of some PRG. The sequence is that of Sensor protein PhoQ (phoQ) from Escherichia coli O157:H7.